The chain runs to 314 residues: tRNA pseudouridine synthase B (314 aa).

Residue H43 participates in substrate binding. The active-site Nucleophile is the D48. Positions 76, 179, and 200 each coordinate substrate.

Belongs to the pseudouridine synthase TruB family. Type 1 subfamily.

It catalyses the reaction uridine(55) in tRNA = pseudouridine(55) in tRNA. Functionally, responsible for synthesis of pseudouridine from uracil-55 in the psi GC loop of transfer RNAs. This Salmonella paratyphi B (strain ATCC BAA-1250 / SPB7) protein is tRNA pseudouridine synthase B.